Here is a 728-residue protein sequence, read N- to C-terminus: Plakophilin-1 (728 aa).

A required for binding to single stranded DNA region spans residues 1–235; the sequence is MNHSPLKTAL…SFGHSRASSK (235 aa). Residues 1–287 are required for interaction with EIF4A1; the sequence is MNHSPLKTAL…ESAKQQVYQL (287 aa). Phosphoserine; by RIPK4 is present on Ser-4. The segment at 48-69 is disordered; sequence TVKRQKSKSSQSSTLSHSNRGS. Phosphorylation in this region is required for cytoplasmic localization and protein stabilization stretches follow at residues 54 to 69 and 117 to 192; these read SKSSQSSTLSHSNRGS and RFSS…STCS. Position 119 is a phosphoserine (Ser-119). A Phosphoserine; by RIPK4 modification is found at Ser-120. A Phosphoserine modification is found at Ser-122. A Phosphoserine; by RIPK4 modification is found at Ser-143. The required for WNT-mediated nuclear localization stretch occupies residues 161–270; sequence YCDPRGTLRK…KYQAIGAYYI (110 aa). 9 ARM repeats span residues 244–275, 276–317, 318–360, 361–412, 413–443, 505–536, 537–583, 584–629, and 630–694; these read SGLTIPKAVQYLCSQDEKYQAIGAYYIQHTCF, QDES…NLVF, RSTP…NLSS, TDEL…GCLR, NLSSADAGRQTMRNYSGLIDSLMAYVQNCVA, NYDCPLPEEETNPKGSSWLYHSDAIRTYLNLM, GKSK…IARL, LQSG…SHTG, and NTSN…DMWA.

This sequence belongs to the beta-catenin family. As to quaternary structure, part of a complex that contains DSG3, PKP1, YAP1 and YWHAG; the complex is required for localization of DSG3 and YAP1 to the cell membrane in keratinocytes. Interacts (via N-terminus) with KRT5/CK5, KRT8/CK8 (via rod domain), KRT15/CK15 and KRT18/CK18 (via rod domain) as part of intermediate filaments. Interacts with VIM (via rod domain). Interacts with DSP. Interacts with DES. Interacts with FXR1; the interaction may facilitate the binding of PKP1 to PKP2, PKP3 and DSP mRNA. Interacts (via N-terminus) with EIF4A1; the interaction promotes EIF4A1 recruitment to the cap-dependent translation complex and EIF4A1 ATPase activity. Interacts with TJP1/ZO-1; the interaction facilitates TJP1/ZO-1 localization to the plasma membrane. Interacts (when phosphorylated) with YWHAG; the interaction results in translocation of PKP1 to the cytoplasm and loss of intercellular adhesion in keratinocytes. Post-translationally, phosphorylated by AKT2; required for interaction with YWHAG and subsequent localization away from desmosomes to the cytoplasm. Phosphorylation of Ser-119 by AKT2 promotes PKP1-driven cap-dependent mRNA translation and decreases intercellular adhesion, phosphorylation is promoted by insulin. Phosphorylation by RIPK4 at the N-terminus is required for its role in differentiation of keratinocytes and DSG1 localization at cell junctions. In terms of tissue distribution, expressed in undifferentiated keratinocytes of the epidermis at birth, expression increases as differentiation proceeds (at protein level). Expressed in the cervical loop during early tooth differentiation, expression is then present between ameloblasts, at ameloblast-ameloblast junctions and in the stratum intermedium during pre-secretory and secretory stages of tooth development (at protein level).

Its subcellular location is the nucleus. The protein resides in the cytoplasm. The protein localises to the perinuclear region. It is found in the cell junction. It localises to the desmosome. Its subcellular location is the cell membrane. The protein resides in the stress granule. A component of desmosome cell-cell junctions which are required for positive regulation of cellular adhesion. Plays a role in desmosome protein expression regulation and localization to the desmosomal plaque, thereby maintaining cell sheet integrity and anchorage of desmosomes to intermediate filaments. Required for localization of DSG3 and YAP1 to the cell membrane in keratinocytes in response to mechanical strain, via the formation of an interaction complex composed of DSG3, YAP1, PKP1 and YWHAG. Positively regulates differentiation of keratinocytes, potentially via promoting localization of DSG1 at desmosome cell junctions. Required for calcium-independent development and maturation of desmosome plaques specifically at lateral cell-cell contacts in differentiating keratinocytes. Plays a role in the maintenance of DSG3 protein abundance, DSG3 clustering and localization of these clusters to the cell membrane in keratinocytes. May also promote keratinocyte proliferation and morphogenesis during postnatal development. Required for tight junction inside-out transepidermal barrier function of the skin, and is thereby involved in neonatal survival possibly via maintenance of hydration levels. Promotes Wnt-mediated proliferation and differentiation of ameloblasts, via facilitating TJP1/ZO-1 localization to tight junctions. Binds single-stranded DNA (ssDNA), and may thereby play a role in sensing DNA damage and promoting cell survival. Positively regulates cap-dependent translation and as a result cell proliferation, via recruitment of EIF4A1 to the initiation complex and promotion of EIF4A1 ATPase activity. Regulates the mRNA stability and protein abundance of desmosome components PKP2, PKP3, DSC2 and DSP, potentially via its interaction with FXR1. The sequence is that of Plakophilin-1 (Pkp1) from Mus musculus (Mouse).